The chain runs to 74 residues: Lambda-hexatoxin-Hv1d (74 aa).

The N-terminal stretch at 1–22 (MNTATCFIVLLVVATVIGGIEA) is a signal peptide. A propeptide spanning residues 23–35 (GESDMRKDVMGLF) is cleaved from the precursor. 4 disulfide bridges follow: C40–C54, C47–C59, C50–C51, and C53–C69.

The protein belongs to the neurotoxin 11 (kappa toxin) family. In terms of tissue distribution, expressed by the venom gland.

Its subcellular location is the secreted. In terms of biological role, this excitatory toxin inhibits insect calcium-activated potassium (KCa) channels (Slo-type). The polypeptide is Lambda-hexatoxin-Hv1d (Hadronyche versuta (Blue mountains funnel-web spider)).